A 179-amino-acid polypeptide reads, in one-letter code: Ribosome maturation factor RimM (179 aa).

The PRC barrel domain maps to 100 to 176 (KEEFHLLELI…FLIINPPNGL (77 aa)).

This sequence belongs to the RimM family. Binds ribosomal protein uS19.

It is found in the cytoplasm. An accessory protein needed during the final step in the assembly of 30S ribosomal subunit, possibly for assembly of the head region. Essential for efficient processing of 16S rRNA. May be needed both before and after RbfA during the maturation of 16S rRNA. It has affinity for free ribosomal 30S subunits but not for 70S ribosomes. The polypeptide is Ribosome maturation factor RimM (Prochlorococcus marinus (strain AS9601)).